We begin with the raw amino-acid sequence, 241 residues long: Host range factor p28 (241 aa).

The region spanning 21–131 is the KilA-N domain; sequence YIDEPNDIRL…QSILRGLVNW (111 aa). The RING-type zinc-finger motif lies at 172 to 225; it reads CGICYEVVYSKRLENDRYFGLLDSCNHIFCITCINIWHRTRRETGASDNCPICR.

The protein belongs to the orthopoxvirus OPG021 family.

It localises to the host cytoplasm. The enzyme catalyses S-ubiquitinyl-[E2 ubiquitin-conjugating enzyme]-L-cysteine + [acceptor protein]-L-lysine = [E2 ubiquitin-conjugating enzyme]-L-cysteine + N(6)-ubiquitinyl-[acceptor protein]-L-lysine.. In terms of biological role, RING-finger E3 ubiquitin ligase which catalyzes the formation of both 'Lys-48'- and 'Lys-63'-linked polyubiquitin chains. Plays an important role in virulence by acting as an anti-apoptotic factor. In Ectromelia virus (strain Moscow) (ECTV), this protein is Host range factor p28 (OPG021).